Reading from the N-terminus, the 371-residue chain is Opsin Rh1 (371 aa).

The Extracellular portion of the chain corresponds to 1–47 (MERYSTPLIGPSFAALTNGSVTDKVTPDMAHLVHPYWNQFPAMEPKW). The N-linked (GlcNAc...) asparagine glycan is linked to Asn-18. The helical transmembrane segment at 48–72 (AKFLAAYMVLIATISWCGNGVVIYI) threads the bilayer. Topologically, residues 73 to 84 (FSTTKSLRTPAN) are cytoplasmic. A helical transmembrane segment spans residues 85–110 (LLVINLAISDFGIMITNTPMMGINLF). Over 111–124 (YETWVLGPLMCDIY) the chain is Extracellular. Cys-121 and Cys-198 are oxidised to a cystine. Residues 125–144 (GGLGSAFGCSSILSMCMISL) traverse the membrane as a helical segment. Topologically, residues 145–163 (DRYNVIVKGMAGQPMTIKL) are cytoplasmic. The helical transmembrane segment at 164–187 (AIMKIALIWFMASIWTLAPVFGWS) threads the bilayer. The Extracellular segment spans residues 188–211 (RYVPEGNLTSCGIDYLERDWNPRS). A helical membrane pass occupies residues 212–239 (YLIFYSIFVYYLPLFLICYSYWFIIAAV). Residues 240 to 274 (SAHEKAMREQAKKMNVKSLRSSEDADKSAEGKLAK) lie on the Cytoplasmic side of the membrane. A helical membrane pass occupies residues 275–298 (VALVTISLWFMAWTPYTIINTLGL). At 299–305 (FKYEGLT) the chain is on the extracellular side. The helical transmembrane segment at 306–330 (PLNTIWGACFAKSAACYNPIVYGIS) threads the bilayer. Lys-317 is modified (N6-(retinylidene)lysine). Residues 331 to 371 (HPKYGIALKEKCPCCVFGKVDDGKASDATSQATNNESETKA) lie on the Cytoplasmic side of the membrane.

The protein belongs to the G-protein coupled receptor 1 family. Opsin subfamily. In terms of processing, phosphorylated on some or all of the serine and threonine residues present in the C-terminal region.

It localises to the cell projection. The protein localises to the rhabdomere membrane. Its function is as follows. Visual pigments are the light-absorbing molecules that mediate vision. They consist of an apoprotein, opsin, covalently linked to cis-retinal. The protein is Opsin Rh1 (NINAE) of Calliphora vicina (Blue blowfly).